The primary structure comprises 433 residues: Gamma-glutamyl phosphate reductase 1 (433 aa).

Belongs to the gamma-glutamyl phosphate reductase family.

It is found in the cytoplasm. The enzyme catalyses L-glutamate 5-semialdehyde + phosphate + NADP(+) = L-glutamyl 5-phosphate + NADPH + H(+). It functions in the pathway amino-acid biosynthesis; L-proline biosynthesis; L-glutamate 5-semialdehyde from L-glutamate: step 2/2. Its function is as follows. Catalyzes the NADPH-dependent reduction of L-glutamate 5-phosphate into L-glutamate 5-semialdehyde and phosphate. The product spontaneously undergoes cyclization to form 1-pyrroline-5-carboxylate. The sequence is that of Gamma-glutamyl phosphate reductase 1 from Synechocystis sp. (strain ATCC 27184 / PCC 6803 / Kazusa).